The primary structure comprises 254 residues: 3-oxo-5-alpha-steroid 4-dehydrogenase 2 (254 aa).

4 helical membrane passes run 8–28 (VPVLAGSATLATMGTLILCFG), 72–92 (PRSLFGPPGNVLLGLFSAHYF), 146–166 (FSVGVFFFILGMGINIHSDCM), and 206–226 (LATWSVPAFAFAFFTLCFLGM).

The protein belongs to the steroid 5-alpha reductase family.

Its subcellular location is the microsome membrane. It localises to the endoplasmic reticulum membrane. The catalysed reaction is a 3-oxo-5alpha-steroid + NADP(+) = a 3-oxo-Delta(4)-steroid + NADPH + H(+). The enzyme catalyses 17beta-hydroxy-5alpha-androstan-3-one + NADP(+) = testosterone + NADPH + H(+). It catalyses the reaction 5alpha-pregnane-3,20-dione + NADP(+) = progesterone + NADPH + H(+). Functionally, converts testosterone (T) into 5-alpha-dihydrotestosterone (DHT) and progesterone or corticosterone into their corresponding 5-alpha-3-oxosteroids. It plays a central role in sexual differentiation and androgen physiology. The chain is 3-oxo-5-alpha-steroid 4-dehydrogenase 2 (Srd5a2) from Mus musculus (Mouse).